The following is a 205-amino-acid chain: Small ribosomal subunit protein uS4 (205 aa).

Positions 94–157 (SRLDTVVYRM…KQIPLIQESV (64 aa)) constitute an S4 RNA-binding domain.

It belongs to the universal ribosomal protein uS4 family. Part of the 30S ribosomal subunit. Contacts protein S5. The interaction surface between S4 and S5 is involved in control of translational fidelity.

In terms of biological role, one of the primary rRNA binding proteins, it binds directly to 16S rRNA where it nucleates assembly of the body of the 30S subunit. With S5 and S12 plays an important role in translational accuracy. The chain is Small ribosomal subunit protein uS4 from Rickettsia conorii (strain ATCC VR-613 / Malish 7).